Consider the following 113-residue polypeptide: uncharacterized protein (113 aa).

This is an uncharacterized protein from Bacillus subtilis (strain 168).